Reading from the N-terminus, the 219-residue chain is Thiamine-phosphate synthase (219 aa).

Residues 44–48 (QFREK) and N79 each bind 4-amino-2-methyl-5-(diphosphooxymethyl)pyrimidine. Mg(2+) is bound by residues D80 and D99. 4-amino-2-methyl-5-(diphosphooxymethyl)pyrimidine is bound at residue S117. 143–145 (TST) serves as a coordination point for 2-[(2R,5Z)-2-carboxy-4-methylthiazol-5(2H)-ylidene]ethyl phosphate. K146 contacts 4-amino-2-methyl-5-(diphosphooxymethyl)pyrimidine. 2-[(2R,5Z)-2-carboxy-4-methylthiazol-5(2H)-ylidene]ethyl phosphate-binding positions include G175 and 195–196 (IS).

It belongs to the thiamine-phosphate synthase family. Mg(2+) serves as cofactor.

It carries out the reaction 2-[(2R,5Z)-2-carboxy-4-methylthiazol-5(2H)-ylidene]ethyl phosphate + 4-amino-2-methyl-5-(diphosphooxymethyl)pyrimidine + 2 H(+) = thiamine phosphate + CO2 + diphosphate. The enzyme catalyses 2-(2-carboxy-4-methylthiazol-5-yl)ethyl phosphate + 4-amino-2-methyl-5-(diphosphooxymethyl)pyrimidine + 2 H(+) = thiamine phosphate + CO2 + diphosphate. It catalyses the reaction 4-methyl-5-(2-phosphooxyethyl)-thiazole + 4-amino-2-methyl-5-(diphosphooxymethyl)pyrimidine + H(+) = thiamine phosphate + diphosphate. Its pathway is cofactor biosynthesis; thiamine diphosphate biosynthesis; thiamine phosphate from 4-amino-2-methyl-5-diphosphomethylpyrimidine and 4-methyl-5-(2-phosphoethyl)-thiazole: step 1/1. Its function is as follows. Condenses 4-methyl-5-(beta-hydroxyethyl)thiazole monophosphate (THZ-P) and 2-methyl-4-amino-5-hydroxymethyl pyrimidine pyrophosphate (HMP-PP) to form thiamine monophosphate (TMP). This Bacillus cereus (strain AH187) protein is Thiamine-phosphate synthase.